We begin with the raw amino-acid sequence, 263 residues long: Purine nucleoside phosphorylase SAS1121 (263 aa).

Residues H79, C124, and H141 each coordinate Zn(2+).

The protein belongs to the purine nucleoside phosphorylase YfiH/LACC1 family. In terms of assembly, homodimer. The cofactor is Cu(2+). Zn(2+) serves as cofactor.

It carries out the reaction adenosine + phosphate = alpha-D-ribose 1-phosphate + adenine. The catalysed reaction is S-methyl-5'-thioadenosine + phosphate = 5-(methylsulfanyl)-alpha-D-ribose 1-phosphate + adenine. The enzyme catalyses inosine + phosphate = alpha-D-ribose 1-phosphate + hypoxanthine. It catalyses the reaction adenosine + H2O + H(+) = inosine + NH4(+). Its function is as follows. Purine nucleoside enzyme that catalyzes the phosphorolysis of adenosine and inosine nucleosides, yielding D-ribose 1-phosphate and the respective free bases, adenine and hypoxanthine. Also catalyzes the phosphorolysis of S-methyl-5'-thioadenosine into adenine and S-methyl-5-thio-alpha-D-ribose 1-phosphate. Also has adenosine deaminase activity. The protein is Purine nucleoside phosphorylase SAS1121 of Staphylococcus aureus (strain MSSA476).